A 227-amino-acid polypeptide reads, in one-letter code: ATP-dependent dethiobiotin synthetase BioD (227 aa).

13 to 18 (DVGKTV) provides a ligand contact to ATP. Residue T17 participates in Mg(2+) binding. K38 is a catalytic residue. ATP-binding positions include D55, 116–119 (EGAG), 176–177 (NR), and 205–207 (PYI). Residues D55 and E116 each contribute to the Mg(2+) site.

The protein belongs to the dethiobiotin synthetase family. In terms of assembly, homodimer. Mg(2+) serves as cofactor.

Its subcellular location is the cytoplasm. The catalysed reaction is (7R,8S)-7,8-diammoniononanoate + CO2 + ATP = (4R,5S)-dethiobiotin + ADP + phosphate + 3 H(+). The protein operates within cofactor biosynthesis; biotin biosynthesis; biotin from 7,8-diaminononanoate: step 1/2. Catalyzes a mechanistically unusual reaction, the ATP-dependent insertion of CO2 between the N7 and N8 nitrogen atoms of 7,8-diaminopelargonic acid (DAPA, also called 7,8-diammoniononanoate) to form a ureido ring. This chain is ATP-dependent dethiobiotin synthetase BioD, found in Vibrio vulnificus (strain CMCP6).